Here is a 536-residue protein sequence, read N- to C-terminus: G-protein coupled receptor Mth2 (536 aa).

Cystine bridges form between Cys-17/Cys-71, Cys-73/Cys-78, Cys-82/Cys-177, Cys-83/Cys-96, and Cys-138/Cys-197. 2 N-linked (GlcNAc...) asparagine glycosylation sites follow: Asn-24 and Asn-33. 5 N-linked (GlcNAc...) asparagine glycosylation sites follow: Asn-103, Asn-113, Asn-118, Asn-159, and Asn-184. A helical transmembrane segment spans residues 212–232 (YAMMFSIPFMMLTIAVYLLIP). Topologically, residues 233–241 (ELRNQHGKS) are cytoplasmic. A helical transmembrane segment spans residues 242–262 (LVCYLIGLTVGYSSLCYVQLY). The Extracellular portion of the chain corresponds to 263 to 273 (QVDATGVTCKV). The chain crosses the membrane as a helical span at residues 274 to 294 (FGYTAYFFFMGAYMWLSVISF). The Cytoplasmic segment spans residues 295 to 314 (DLWHNFRGTRGINRFQEKKR). A helical transmembrane segment spans residues 315–335 (FLFYSLYSWGIALVFLAFTYC). Over 336-365 (AQQLSNLPDNLKPGIGDGVYCWLDMSNWAA) the chain is Extracellular. The chain crosses the membrane as a helical span at residues 366–386 (MIYFYGPILAIVVANTIMFIM). The Cytoplasmic segment spans residues 387–417 (TAIKIHGVQREMARIIASENSTKNLRTEKDK). The helical transmembrane segment at 418–438 (FGLFLRLFLIMGITWLTELIS) threads the bilayer. The Extracellular portion of the chain corresponds to 439 to 449 (YFVGSDKGWSK). Residues 450 to 470 (LFYISDLANAMQGFLIFMLFV) traverse the membrane as a helical segment. Residues 471-536 (MKKKVKHLIT…VDPQKTTIFR (66 aa)) are Cytoplasmic-facing. The interval 487–506 (RDGSNQRQSQYSTKTTSSSV) is disordered. The span at 492-505 (QRQSQYSTKTTSSS) shows a compositional bias: low complexity.

The protein belongs to the G-protein coupled receptor 2 family. Mth subfamily. As to quaternary structure, homodimer.

Its subcellular location is the cell membrane. In terms of biological role, involved in biological aging and stress response. Essential for adult survival. The chain is G-protein coupled receptor Mth2 (mth2) from Drosophila simulans (Fruit fly).